The primary structure comprises 120 residues: MSAYTVSQLAHNAGVSVHIVRDYLVRGLLRPVACTTGGYGVFDDAALQRLCFVRAAFEAGIGLDALARLCRALDAADGAQAAAQLAVVRQLVERRRAALAHLDAQLASMPAERAHEEALP.

The region spanning 3–72 (AYTVSQLAHN…LDALARLCRA (70 aa)) is the HTH merR-type domain. Positions 6 to 25 (VSQLAHNAGVSVHIVRDYLV) form a DNA-binding region, H-T-H motif.

This Shigella flexneri protein is HTH-type transcriptional regulator MerD (merD).